The primary structure comprises 171 residues: Crossover junction endodeoxyribonuclease RuvC (171 aa).

Residues Asp-11, Glu-71, and Asp-143 contribute to the active site. 3 residues coordinate Mg(2+): Asp-11, Glu-71, and Asp-143.

It belongs to the RuvC family. In terms of assembly, homodimer which binds Holliday junction (HJ) DNA. The HJ becomes 2-fold symmetrical on binding to RuvC with unstacked arms; it has a different conformation from HJ DNA in complex with RuvA. In the full resolvosome a probable DNA-RuvA(4)-RuvB(12)-RuvC(2) complex forms which resolves the HJ. The cofactor is Mg(2+).

Its subcellular location is the cytoplasm. The enzyme catalyses Endonucleolytic cleavage at a junction such as a reciprocal single-stranded crossover between two homologous DNA duplexes (Holliday junction).. Its function is as follows. The RuvA-RuvB-RuvC complex processes Holliday junction (HJ) DNA during genetic recombination and DNA repair. Endonuclease that resolves HJ intermediates. Cleaves cruciform DNA by making single-stranded nicks across the HJ at symmetrical positions within the homologous arms, yielding a 5'-phosphate and a 3'-hydroxyl group; requires a central core of homology in the junction. The consensus cleavage sequence is 5'-(A/T)TT(C/G)-3'. Cleavage occurs on the 3'-side of the TT dinucleotide at the point of strand exchange. HJ branch migration catalyzed by RuvA-RuvB allows RuvC to scan DNA until it finds its consensus sequence, where it cleaves and resolves the cruciform DNA. This chain is Crossover junction endodeoxyribonuclease RuvC, found in Bartonella tribocorum (strain CIP 105476 / IBS 506).